A 350-amino-acid chain; its full sequence is C5a anaphylatoxin chemotactic receptor 1 (350 aa).

The Extracellular segment spans residues 1–37 (MDSFNYTTPDYGHYDDKDTLDLNTPVDKTSNTLRVPD). N5 carries an N-linked (GlcNAc...) asparagine glycan. Residues 10–18 (DYGHYDDKD) are required for CHIPS binding. Sulfotyrosine is present on residues Y11 and Y14. The tract at residues 21-30 (DLNTPVDKTS) is involved in C5a binding. The chain crosses the membrane as a helical span at residues 38–64 (ILALVIFAVVFLVGVLGNALVVWVTAF). Over 65–69 (EAKRT) the chain is Cytoplasmic. Residues 70–93 (INAIWFLNLAVADFLSCLALPILF) traverse the membrane as a helical segment. Over 94 to 110 (TSIVQHHHWPFGGAACS) the chain is Extracellular. C109 and C188 are disulfide-bonded. A helical transmembrane segment spans residues 111 to 132 (ILPSLILLNMYASILLLATISA). The Cytoplasmic portion of the chain corresponds to 133 to 153 (DRFLLVFKPIWCQNFRGAGLA). The helical transmembrane segment at 154–174 (WIACAVAWGLALLLTIPSFLY) threads the bilayer. At 175 to 200 (RVVREEYFPPKVLCGVDYSHDKRRER) the chain is on the extracellular side. The helical transmembrane segment at 201–226 (AVAIVRLVLGFLWPLLTLTICYTFIL) threads the bilayer. At 227 to 242 (LRTWSRRATRSTKTLK) the chain is on the cytoplasmic side. The helical transmembrane segment at 243-265 (VVVAVVASFFIFWLPYQVTGIMM) threads the bilayer. Residues 266–282 (SFLEPSSPTFLLLKKLD) are Extracellular-facing. Residues 283 to 303 (SLCVSFAYINCCINPIIYVVA) form a helical membrane-spanning segment. Residues 304–350 (GQGFQGRLRKSLPSLLRNVLTEESVVRESKSFTRSTVDTMAQKTQAV) are Cytoplasmic-facing. S314, S317, S327, S332, S334, and S338 each carry phosphoserine.

The protein belongs to the G-protein coupled receptor 1 family. Homodimer. May also form higher-order oligomers. Interacts (when phosphorylated) with ARRB1 and ARRB2; the interaction is associated with internalization of C5aR. Interacts (via N-terminal domain) with S.aureus chemotaxis inhibitory protein (CHIPS); the interaction blocks the receptor and may thus inhibit the immune response. Sulfation plays a critical role in the association of C5aR with C5a, but no significant role in the ability of the receptor to transduce a signal and mobilize calcium in response to a small a small peptide agonist. Sulfation at Tyr-14 is important for CHIPS binding. In terms of processing, phosphorylated on serine residues in response to C5a binding, resulting in internalization of the receptor and short-term desensitization to the ligand. The key residues involved in this process are Ser-334 and Ser-338.

It is found in the cell membrane. The protein resides in the cytoplasmic vesicle. In terms of biological role, receptor for the chemotactic and inflammatory peptide anaphylatoxin C5a. The ligand interacts with at least two sites on the receptor: a high-affinity site on the extracellular N-terminus, and a second site in the transmembrane region which activates downstream signaling events. Receptor activation stimulates chemotaxis, granule enzyme release, intracellular calcium release and superoxide anion production. In Homo sapiens (Human), this protein is C5a anaphylatoxin chemotactic receptor 1 (C5AR1).